An 82-amino-acid polypeptide reads, in one-letter code: MLKELINRLLWHPKSSPKDYVIIYLHRGAPDNKKSISVNNIIINDSFLVFNETHIPFHRILEIKNLKTGEILYKKVDIDGLR.

Belongs to the UPF0248 family.

The protein is UPF0248 protein Mevan_1298 of Methanococcus vannielii (strain ATCC 35089 / DSM 1224 / JCM 13029 / OCM 148 / SB).